Here is a 314-residue protein sequence, read N- to C-terminus: tRNA-cytidine(32) 2-sulfurtransferase (314 aa).

The PP-loop motif motif lies at 53–58 (SGGKDS). 3 residues coordinate [4Fe-4S] cluster: Cys128, Cys131, and Cys219.

This sequence belongs to the TtcA family. Homodimer. Requires Mg(2+) as cofactor. [4Fe-4S] cluster is required as a cofactor.

The protein localises to the cytoplasm. The catalysed reaction is cytidine(32) in tRNA + S-sulfanyl-L-cysteinyl-[cysteine desulfurase] + AH2 + ATP = 2-thiocytidine(32) in tRNA + L-cysteinyl-[cysteine desulfurase] + A + AMP + diphosphate + H(+). Its pathway is tRNA modification. In terms of biological role, catalyzes the ATP-dependent 2-thiolation of cytidine in position 32 of tRNA, to form 2-thiocytidine (s(2)C32). The sulfur atoms are provided by the cysteine/cysteine desulfurase (IscS) system. The protein is tRNA-cytidine(32) 2-sulfurtransferase of Colwellia psychrerythraea (strain 34H / ATCC BAA-681) (Vibrio psychroerythus).